Reading from the N-terminus, the 466-residue chain is Adenosylhomocysteinase (466 aa).

Substrate is bound by residues threonine 57, aspartate 132, and glutamate 192. 193–195 (TTT) lines the NAD(+) pocket. 2 residues coordinate substrate: lysine 222 and aspartate 226. NAD(+) is bound by residues asparagine 227, 256-261 (GYGDVG), glutamate 279, asparagine 314, 335-337 (IGH), and asparagine 380.

Belongs to the adenosylhomocysteinase family. The cofactor is NAD(+).

Its subcellular location is the cytoplasm. The enzyme catalyses S-adenosyl-L-homocysteine + H2O = L-homocysteine + adenosine. The protein operates within amino-acid biosynthesis; L-homocysteine biosynthesis; L-homocysteine from S-adenosyl-L-homocysteine: step 1/1. In terms of biological role, may play a key role in the regulation of the intracellular concentration of adenosylhomocysteine. This chain is Adenosylhomocysteinase, found in Brucella anthropi (strain ATCC 49188 / DSM 6882 / CCUG 24695 / JCM 21032 / LMG 3331 / NBRC 15819 / NCTC 12168 / Alc 37) (Ochrobactrum anthropi).